A 173-amino-acid chain; its full sequence is Placenta-specific protein 1 (173 aa).

Residues 1–23 (MNLRKFLGGTVLVAFMLFSYSEQ) form the signal peptide.

This sequence belongs to the PLAC1 family. Expressed in placenta.

The protein resides in the secreted. In terms of biological role, may play a role in placental development. This chain is Placenta-specific protein 1, found in Mus musculus (Mouse).